Consider the following 470-residue polypeptide: Macrophage metalloelastase (470 aa).

Residues 1 to 16 (MKFLLILLLQATASGA) form the signal peptide. The propeptide at 17–105 (LPLNSSTSLE…DVHHFREMPG (89 aa)) is activation peptide. The N-linked (GlcNAc...) asparagine glycan is linked to N20. Residues 90-97 (PRCGVPDV) carry the Cysteine switch motif. C92 is a Zn(2+) binding site. D124 and D158 together coordinate Ca(2+). 2 residues coordinate Zn(2+): H168 and D170. Residues D175, G176, G178, and I180 each coordinate Ca(2+). Zn(2+) is bound at residue H183. Ca(2+) is bound by residues G190, G192, and D194. Position 196 (H196) interacts with Zn(2+). D198, E199, and E201 together coordinate Ca(2+). Zn(2+) is bound at residue H218. Residue E219 is part of the active site. Residues H222 and H228 each coordinate Zn(2+). 4 Hemopexin repeats span residues 279–328 (PALC…WPTL), 329–375 (PSGI…GFPN), 377–425 (VKKI…FQGI), and 426–470 (GPKI…WFGC). Cysteines 282 and 470 form a disulfide. N285 carries an N-linked (GlcNAc...) asparagine glycan. Ca(2+) contacts are provided by D289, E333, D381, and D430.

It belongs to the peptidase M10A family. Ca(2+) serves as cofactor. The cofactor is Zn(2+). In terms of tissue distribution, found in alveolar macrophages but not in peripheral blood monocytes.

It is found in the secreted. It localises to the extracellular space. Its subcellular location is the extracellular matrix. It catalyses the reaction Hydrolysis of soluble and insoluble elastin. Specific cleavages are also produced at 14-Ala-|-Leu-15 and 16-Tyr-|-Leu-17 in the B chain of insulin.. Functionally, may be involved in tissue injury and remodeling. Has significant elastolytic activity. Can accept large and small amino acids at the P1' site, but has a preference for leucine. Aromatic or hydrophobic residues are preferred at the P1 site, with small hydrophobic residues (preferably alanine) occupying P3. This chain is Macrophage metalloelastase (MMP12), found in Homo sapiens (Human).